A 357-amino-acid chain; its full sequence is Probable cinnamyl alcohol dehydrogenase 1 (357 aa).

Cys-47 contributes to the Zn(2+) binding site. Thr-49 is a binding site for NADP(+). Zn(2+) contacts are provided by His-69, Glu-70, Cys-100, Cys-103, Cys-106, Cys-114, and Cys-163. NADP(+) contacts are provided by residues Thr-167, 188–193 (GLGGVG), 211–216 (SSSNKK), Thr-251, Gly-275, and 298–300 (SFI).

The protein belongs to the zinc-containing alcohol dehydrogenase family. As to quaternary structure, homodimer. It depends on Zn(2+) as a cofactor. Post-translationally, the N-terminus is blocked.

The catalysed reaction is (E)-cinnamyl alcohol + NADP(+) = (E)-cinnamaldehyde + NADPH + H(+). The enzyme catalyses (E)-coniferol + NADP(+) = (E)-coniferaldehyde + NADPH + H(+). It carries out the reaction (E)-sinapyl alcohol + NADP(+) = (E)-sinapaldehyde + NADPH + H(+). It catalyses the reaction (E)-4-coumaroyl alcohol + NADP(+) = (E)-4-coumaraldehyde + NADPH + H(+). The catalysed reaction is (E)-caffeyl alcohol + NADP(+) = (E)-caffeyl aldehyde + NADPH + H(+). It functions in the pathway aromatic compound metabolism; phenylpropanoid biosynthesis. Functionally, involved in lignin biosynthesis. Catalyzes the final step specific for the production of lignin monomers. Catalyzes the NADPH-dependent reduction of coniferaldehyde, 5-hydroxyconiferaldehyde, sinapaldehyde, 4-coumaraldehyde and caffeyl aldehyde to their respective alcohols. This Nicotiana tabacum (Common tobacco) protein is Probable cinnamyl alcohol dehydrogenase 1.